The chain runs to 274 residues: Penicillin-insensitive murein endopeptidase (274 aa).

The signal sequence occupies residues 1–19 (MKKTAIALLAWFVSSASLA). 3 disulfides stabilise this stretch: Cys-44–Cys-265, Cys-187–Cys-235, and Cys-216–Cys-223. Zn(2+) is bound by residues His-110, His-113, Asp-120, Asp-147, His-150, and His-211. Residues 225–274 (DQPLPPPGDGCGAELQSWFEPPKPGTTKPEKKTPPPLPPSCQALLDEHVL) form a disordered region.

The protein belongs to the peptidase M74 family. In terms of assembly, dimer. Zn(2+) is required as a cofactor.

The protein resides in the periplasm. Murein endopeptidase that cleaves the D-alanyl-meso-2,6-diamino-pimelyl amide bond that connects peptidoglycan strands. Likely plays a role in the removal of murein from the sacculus. The polypeptide is Penicillin-insensitive murein endopeptidase (Salmonella choleraesuis (strain SC-B67)).